The chain runs to 141 residues: Putative nickel-responsive regulator (141 aa).

Histidine 80, histidine 91, histidine 93, and cysteine 99 together coordinate Ni(2+).

This sequence belongs to the transcriptional regulatory CopG/NikR family. The cofactor is Ni(2+).

Its function is as follows. Transcriptional regulator. This chain is Putative nickel-responsive regulator, found in Methanococcus maripaludis (strain DSM 14266 / JCM 13030 / NBRC 101832 / S2 / LL).